A 401-amino-acid polypeptide reads, in one-letter code: Nicotinate phosphoribosyltransferase (401 aa).

His224 is subject to Phosphohistidine; by autocatalysis.

The protein belongs to the NAPRTase family. In terms of processing, transiently phosphorylated on a His residue during the reaction cycle. Phosphorylation strongly increases the affinity for substrates and increases the rate of nicotinate D-ribonucleotide production. Dephosphorylation regenerates the low-affinity form of the enzyme, leading to product release.

The catalysed reaction is nicotinate + 5-phospho-alpha-D-ribose 1-diphosphate + ATP + H2O = nicotinate beta-D-ribonucleotide + ADP + phosphate + diphosphate. Its pathway is cofactor biosynthesis; NAD(+) biosynthesis; nicotinate D-ribonucleotide from nicotinate: step 1/1. Catalyzes the synthesis of beta-nicotinate D-ribonucleotide from nicotinate and 5-phospho-D-ribose 1-phosphate at the expense of ATP. The protein is Nicotinate phosphoribosyltransferase of Pseudomonas putida (strain ATCC 47054 / DSM 6125 / CFBP 8728 / NCIMB 11950 / KT2440).